A 277-amino-acid chain; its full sequence is MQQDSHTHGIDMSALGRNKQGLQLAEETVAIEVPGLSLFYGDKQALFDVSMNIPKQRVTAFIGPSGCGKSTLLRTFNRMNDLVDGCRVEGAINLYGNNIYRKGEDVAELRRRVGMVFQKPNPFPKTIYENVVYGLRIQGINKKRVLDEAVEWALKGAALWDEVKDRLHESALGLSGGQQQRLVIARTIAVEPEVLLLDEPCSALDPISTLKVEELIYELKSKYTIVIVTHNMQQAARVSDYTAFMYLGKLVEFGDTDTLFTNPAKKQTEDYITGRYG.

Positions I31–I272 constitute an ABC transporter domain. G63–S70 is an ATP binding site.

This sequence belongs to the ABC transporter superfamily. Phosphate importer (TC 3.A.1.7) family. In terms of assembly, the complex is composed of two ATP-binding proteins (PstB), two transmembrane proteins (PstC and PstA) and a solute-binding protein (PstS).

Its subcellular location is the cell inner membrane. It carries out the reaction phosphate(out) + ATP + H2O = ADP + 2 phosphate(in) + H(+). Part of the ABC transporter complex PstSACB involved in phosphate import. Responsible for energy coupling to the transport system. This is Phosphate import ATP-binding protein PstB from Pseudomonas putida (Arthrobacter siderocapsulatus).